A 120-amino-acid polypeptide reads, in one-letter code: Large ribosomal subunit protein bL12 (120 aa).

This sequence belongs to the bacterial ribosomal protein bL12 family. In terms of assembly, homodimer. Part of the ribosomal stalk of the 50S ribosomal subunit. Forms a multimeric L10(L12)X complex, where L10 forms an elongated spine to which 2 to 4 L12 dimers bind in a sequential fashion. Binds GTP-bound translation factors.

Forms part of the ribosomal stalk which helps the ribosome interact with GTP-bound translation factors. Is thus essential for accurate translation. The sequence is that of Large ribosomal subunit protein bL12 from Lactobacillus gasseri (strain ATCC 33323 / DSM 20243 / BCRC 14619 / CIP 102991 / JCM 1131 / KCTC 3163 / NCIMB 11718 / NCTC 13722 / AM63).